A 118-amino-acid chain; its full sequence is uncharacterized protein (118 aa).

The next 3 membrane-spanning stretches (helical) occupy residues 17–37 (IIIIFYVITSMVQGNYHFAIL), 60–80 (INYTIIGTIIGQYTVLIIMIF), and 90–110 (YIEQILTTNLSIVGYAFGSFW).

The protein resides in the membrane. This is an uncharacterized protein from Acanthamoeba polyphaga mimivirus (APMV).